A 234-amino-acid chain; its full sequence is MQTPSENTDVKMDTLDEPSAHLIEENVALPEDTFSSHLSYVLYEIAHCKPIMFMIIIIVSLISLIVLFHDNDGCTVILVMSLIVASMALMVVAAFTFGKAITEQEFMIKLLVEVIARKPAGKEWGTVAYNMNQYLFMKRLWYTPYYFYSGKKCHEFFTTLIKEVNSGSHSDSSSNSAEDTQSPVSAGKTSNGLNNFYSIRSDPILMAYVLKATQIEKEAQSEYWRKQYPDADLP.

The Cytoplasmic portion of the chain corresponds to 1–47 (MQTPSENTDVKMDTLDEPSAHLIEENVALPEDTFSSHLSYVLYEIAH). The helical transmembrane segment at 48–68 (CKPIMFMIIIIVSLISLIVLF) threads the bilayer. The tract at residues 68 to 75 (FHDNDGCT) is required for resistance to killer toxin K28, a protein-toxin encoded by the M28 virus. Over 69 to 76 (HDNDGCTV) the chain is Extracellular. A helical membrane pass occupies residues 77–97 (ILVMSLIVASMALMVVAAFTF). Over 98–234 (GKAITEQEFM…RKQYPDADLP (137 aa)) the chain is Cytoplasmic. Positions 147-234 (FYSGKKCHEF…RKQYPDADLP (88 aa)) are required for resistance to killer toxin K28, a protein-toxin encoded by the M28 virus. A disordered region spans residues 168–187 (SHSDSSSNSAEDTQSPVSAG). The span at 177–187 (AEDTQSPVSAG) shows a compositional bias: polar residues. Lysine 217 is covalently cross-linked (Glycyl lysine isopeptide (Lys-Gly) (interchain with G-Cter in ubiquitin)).

Belongs to the DUP/COS family.

It localises to the vacuole membrane. The protein localises to the golgi apparatus. Its subcellular location is the trans-Golgi network membrane. The protein resides in the endosome membrane. Functionally, confers resistance to killer toxin K28, a protein-toxin encoded by the M28 virus that uses S.cerevisiae as a host. Probably acts against K28 after endocytosis of the protein-toxin. The chain is Protein-toxin resistance protein KTD1 from Saccharomyces cerevisiae (strain ATCC 204508 / S288c) (Baker's yeast).